The primary structure comprises 60 residues: Large ribosomal subunit protein uL30 (60 aa).

It belongs to the universal ribosomal protein uL30 family. In terms of assembly, part of the 50S ribosomal subunit.

In Streptomyces coelicolor (strain ATCC BAA-471 / A3(2) / M145), this protein is Large ribosomal subunit protein uL30.